Reading from the N-terminus, the 336-residue chain is MYYPFVRKALFQLDPERAHEFTFQQLRRITGTPLEALVRQKVPTKPVTCMGLTFKNPLGLAAGLDKDGECIDALGAMGFGSLEIGTVTPRPQPGNDKPRLFRLVDAEGLINRMGFNNLGVDNLVENVKKAHFDGILGINIGKNKDTPVENGKDDYLICMEKVYAYAGYIAINISSPNTPGLRTLQYGDALDDLLTAIKNKQNDLQAIHHKYVPVAVKIAPDLCEEELIQVADSLLRHNIDGVIATNTTLDRSLVQGMKNCQQTGGLSGRPLQLKSTEIIRRLSQELKGQLPIIGVGGIDSVIAAREKIAAGATLVQIYSGFIFKGPPLIKEIVTHI.

Residues 62-66 and Thr86 contribute to the FMN site; that span reads AGLDK. Lys66 is a substrate binding site. 111-115 contacts substrate; sequence NRMGF. Positions 139 and 172 each coordinate FMN. Asn172 provides a ligand contact to substrate. The Nucleophile role is filled by Ser175. Asn177 contacts substrate. Residues Lys217 and Thr245 each coordinate FMN. Position 246-247 (246-247) interacts with substrate; the sequence is NT. Residues Gly268, Gly297, and 318–319 contribute to the FMN site; that span reads YS.

The protein belongs to the dihydroorotate dehydrogenase family. Type 2 subfamily. As to quaternary structure, monomer. It depends on FMN as a cofactor.

The protein localises to the cell membrane. The enzyme catalyses (S)-dihydroorotate + a quinone = orotate + a quinol. It functions in the pathway pyrimidine metabolism; UMP biosynthesis via de novo pathway; orotate from (S)-dihydroorotate (quinone route): step 1/1. In terms of biological role, catalyzes the conversion of dihydroorotate to orotate with quinone as electron acceptor. This Salmonella agona (strain SL483) protein is Dihydroorotate dehydrogenase (quinone).